The primary structure comprises 397 residues: Polygalacturonase (397 aa).

The signal sequence occupies residues 1–22 (MGSYLGIYTILVLCLLGYSANA). PbH1 repeat units lie at residues 169 to 195 (GKNMTFDNIKIIAPAESPNTDGIHLGR), 196 to 217 (CEGVKILNTKIATGDDCISVGD), 219 to 239 (MKNLLIEKVVCGPGHGISVGS), and 249 to 270 (VTDITVKNCTLEGTSNGLRIKT). A glycan (N-linked (GlcNAc...) asparagine) is linked at N171. D210 serves as the catalytic Proton donor. An intrachain disulfide couples C212 to C229. The active site involves H233. N-linked (GlcNAc...) asparagine glycosylation occurs at N256. Cystine bridges form between C341–C347 and C370–C386.

The protein belongs to the glycosyl hydrolase 28 family. As to expression, pollen.

It is found in the secreted. It localises to the cell wall. The catalysed reaction is (1,4-alpha-D-galacturonosyl)n+m + H2O = (1,4-alpha-D-galacturonosyl)n + (1,4-alpha-D-galacturonosyl)m.. Its function is as follows. May function in depolymerizing pectin during pollen development, germination, and tube growth. In Brassica napus (Rape), this protein is Polygalacturonase.